Consider the following 302-residue polypeptide: Pantothenate synthetase (302 aa).

30–37 lines the ATP pocket; the sequence is MGALHGGH. Residue H37 is the Proton donor of the active site. Q61 is a (R)-pantoate binding site. Beta-alanine is bound at residue Q61. An ATP-binding site is contributed by 147–150; sequence GEKD. (R)-pantoate is bound at residue Q153. Residues V176 and 184 to 187 contribute to the ATP site; that span reads KSSR.

It belongs to the pantothenate synthetase family. As to quaternary structure, homodimer.

Its subcellular location is the cytoplasm. It carries out the reaction (R)-pantoate + beta-alanine + ATP = (R)-pantothenate + AMP + diphosphate + H(+). The protein operates within cofactor biosynthesis; (R)-pantothenate biosynthesis; (R)-pantothenate from (R)-pantoate and beta-alanine: step 1/1. Its function is as follows. Catalyzes the condensation of pantoate with beta-alanine in an ATP-dependent reaction via a pantoyl-adenylate intermediate. In Shouchella clausii (strain KSM-K16) (Alkalihalobacillus clausii), this protein is Pantothenate synthetase.